Reading from the N-terminus, the 115-residue chain is U3-lycotoxin-Ls1k (115 aa).

Positions 1 to 20 (MKFVLLFGVLLVTLFSYSSA) are cleaved as a signal peptide. Positions 21–44 (EMFDDFDQADEDELLSLIEKEEAR) are excised as a propeptide. Intrachain disulfides connect Cys48/Cys63, Cys55/Cys72, Cys62/Cys87, and Cys74/Cys85.

Belongs to the neurotoxin 19 (CSTX) family. 01 subfamily. In terms of tissue distribution, expressed by the venom gland.

The protein resides in the secreted. The protein is U3-lycotoxin-Ls1k of Lycosa singoriensis (Wolf spider).